The primary structure comprises 362 residues: Phosphoserine aminotransferase (362 aa).

The L-glutamate site is built by Ser9 and Arg42. Residues 76–77 (GR), Trp102, Thr153, Asp174, and Gln197 each bind pyridoxal 5'-phosphate. At Lys198 the chain carries N6-(pyridoxal phosphate)lysine. 239–240 (NT) contributes to the pyridoxal 5'-phosphate binding site.

This sequence belongs to the class-V pyridoxal-phosphate-dependent aminotransferase family. SerC subfamily. In terms of assembly, homodimer. Pyridoxal 5'-phosphate serves as cofactor.

It localises to the cytoplasm. The catalysed reaction is O-phospho-L-serine + 2-oxoglutarate = 3-phosphooxypyruvate + L-glutamate. The enzyme catalyses 4-(phosphooxy)-L-threonine + 2-oxoglutarate = (R)-3-hydroxy-2-oxo-4-phosphooxybutanoate + L-glutamate. The protein operates within amino-acid biosynthesis; L-serine biosynthesis; L-serine from 3-phospho-D-glycerate: step 2/3. It participates in cofactor biosynthesis; pyridoxine 5'-phosphate biosynthesis; pyridoxine 5'-phosphate from D-erythrose 4-phosphate: step 3/5. Catalyzes the reversible conversion of 3-phosphohydroxypyruvate to phosphoserine and of 3-hydroxy-2-oxo-4-phosphonooxybutanoate to phosphohydroxythreonine. This chain is Phosphoserine aminotransferase, found in Salmonella arizonae (strain ATCC BAA-731 / CDC346-86 / RSK2980).